The chain runs to 939 residues: Nonsense-mediated mRNA decay factor SMG8 (939 aa).

Disordered stretches follow at residues 561–600 and 617–645; these read KICT…QLSP and LNES…ADTE. The span at 567 to 587 shows a compositional bias: acidic residues; it reads GEDENEDGETEEADEDTEEKE. Residues 617 to 629 are compositionally biased toward low complexity; that stretch reads LNESQESSEQLSG.

It belongs to the SMG8 family.

Its function is as follows. Involved in nonsense-mediated decay (NMD) of mRNAs containing premature stop codons. Probable component of kinase complex containing nonC and recruited to stalled ribosomes. The polypeptide is Nonsense-mediated mRNA decay factor SMG8 (Drosophila ananassae (Fruit fly)).